A 473-amino-acid polypeptide reads, in one-letter code: UDP-N-acetylmuramoylalanine--D-glutamate ligase (473 aa).

120-126 (GSNGKTT) provides a ligand contact to ATP.

The protein belongs to the MurCDEF family.

The protein localises to the cytoplasm. It carries out the reaction UDP-N-acetyl-alpha-D-muramoyl-L-alanine + D-glutamate + ATP = UDP-N-acetyl-alpha-D-muramoyl-L-alanyl-D-glutamate + ADP + phosphate + H(+). The protein operates within cell wall biogenesis; peptidoglycan biosynthesis. In terms of biological role, cell wall formation. Catalyzes the addition of glutamate to the nucleotide precursor UDP-N-acetylmuramoyl-L-alanine (UMA). This Nitrosospira multiformis (strain ATCC 25196 / NCIMB 11849 / C 71) protein is UDP-N-acetylmuramoylalanine--D-glutamate ligase.